A 249-amino-acid chain; its full sequence is Phosphatidylserine decarboxylase proenzyme (249 aa).

Catalysis depends on serine 208, which acts as the Schiff-base intermediate with substrate; via pyruvic acid. At serine 208 the chain carries Pyruvic acid (Ser); by autocatalysis.

Belongs to the phosphatidylserine decarboxylase family. PSD-A subfamily. Heterodimer of a large membrane-associated beta subunit and a small pyruvoyl-containing alpha subunit. Pyruvate is required as a cofactor. Is synthesized initially as an inactive proenzyme. Formation of the active enzyme involves a self-maturation process in which the active site pyruvoyl group is generated from an internal serine residue via an autocatalytic post-translational modification. Two non-identical subunits are generated from the proenzyme in this reaction, and the pyruvate is formed at the N-terminus of the alpha chain, which is derived from the carboxyl end of the proenzyme. The post-translation cleavage follows an unusual pathway, termed non-hydrolytic serinolysis, in which the side chain hydroxyl group of the serine supplies its oxygen atom to form the C-terminus of the beta chain, while the remainder of the serine residue undergoes an oxidative deamination to produce ammonia and the pyruvoyl prosthetic group on the alpha chain.

It is found in the cell membrane. The catalysed reaction is a 1,2-diacyl-sn-glycero-3-phospho-L-serine + H(+) = a 1,2-diacyl-sn-glycero-3-phosphoethanolamine + CO2. It functions in the pathway phospholipid metabolism; phosphatidylethanolamine biosynthesis; phosphatidylethanolamine from CDP-diacylglycerol: step 2/2. Its function is as follows. Catalyzes the formation of phosphatidylethanolamine (PtdEtn) from phosphatidylserine (PtdSer). The sequence is that of Phosphatidylserine decarboxylase proenzyme from Erythrobacter litoralis (strain HTCC2594).